Reading from the N-terminus, the 1040-residue chain is Multidrug resistance protein MdtB (1040 aa).

Transmembrane regions (helical) follow at residues 25-45 (LLMA…PVAA), 347-367 (LMLA…NIPA), 369-389 (IIPG…MVFL), 396-416 (LTLM…IVVI), 440-460 (IGFT…PLLF), 472-492 (FAVT…TLTP), 537-557 (WLTL…WIVI), 863-883 (LGST…VLGV), 888-908 (FIHP…ALLA), 910-930 (IIAG…LIGI), 968-988 (ILMT…STGV), and 998-1018 (IAMV…TPVI).

Belongs to the resistance-nodulation-cell division (RND) (TC 2.A.6) family. MdtB subfamily. Part of a tripartite efflux system composed of MdtA, MdtB and MdtC. MdtB forms a heteromultimer with MdtC.

The protein resides in the cell inner membrane. The protein is Multidrug resistance protein MdtB of Salmonella choleraesuis (strain SC-B67).